A 232-amino-acid chain; its full sequence is Ribonuclease P protein component 3 (232 aa).

This sequence belongs to the eukaryotic/archaeal RNase P protein component 3 family. In terms of assembly, consists of a catalytic RNA component and at least 4-5 protein subunits.

Its subcellular location is the cytoplasm. It carries out the reaction Endonucleolytic cleavage of RNA, removing 5'-extranucleotides from tRNA precursor.. Part of ribonuclease P, a protein complex that generates mature tRNA molecules by cleaving their 5'-ends. The sequence is that of Ribonuclease P protein component 3 from Halobacterium salinarum (strain ATCC 29341 / DSM 671 / R1).